Reading from the N-terminus, the 279-residue chain is Movement protein (279 aa).

This sequence belongs to the cucumovirus movement protein family.

Its subcellular location is the host cell junction. The protein localises to the host plasmodesma. Transports viral genome to neighboring plant cells directly through plasmosdesmata, without any budding. The movement protein allows efficient cell to cell propagation, by bypassing the host cell wall barrier. Acts by forming a tubular structure at the host plasmodesmata, enlarging it enough to allow free passage of virion capsids. This chain is Movement protein, found in Cucumber mosaic virus (strain M) (CMV).